The sequence spans 201 residues: Superoxide dismutase [Mn/Fe] (201 aa).

The Fe(3+) site is built by His-27, His-81, Asp-162, and His-166. Mn(2+) is bound by residues His-27, His-81, Asp-162, and His-166.

It belongs to the iron/manganese superoxide dismutase family. In terms of assembly, homodimer. It depends on Mn(2+) as a cofactor. The cofactor is Fe(3+).

It catalyses the reaction 2 superoxide + 2 H(+) = H2O2 + O2. Functionally, destroys superoxide anion radicals which are normally produced within the cells and which are toxic to biological systems. Catalyzes the dismutation of superoxide anion radicals into O2 and H2O2 by successive reduction and oxidation of the transition metal ion at the active site. The protein is Superoxide dismutase [Mn/Fe] (sodA) of Staphylococcus carnosus.